Consider the following 486-residue polypeptide: N-succinylglutamate 5-semialdehyde dehydrogenase (486 aa).

220–225 (GSSRTG) serves as a coordination point for NAD(+). Active-site residues include E243 and C277.

It belongs to the aldehyde dehydrogenase family. AstD subfamily.

The catalysed reaction is N-succinyl-L-glutamate 5-semialdehyde + NAD(+) + H2O = N-succinyl-L-glutamate + NADH + 2 H(+). Its pathway is amino-acid degradation; L-arginine degradation via AST pathway; L-glutamate and succinate from L-arginine: step 4/5. Functionally, catalyzes the NAD-dependent reduction of succinylglutamate semialdehyde into succinylglutamate. This chain is N-succinylglutamate 5-semialdehyde dehydrogenase, found in Shewanella putrefaciens (strain CN-32 / ATCC BAA-453).